We begin with the raw amino-acid sequence, 382 residues long: uncharacterized protein (382 aa).

The next 12 membrane-spanning stretches (helical) occupy residues 14-34 (GLLL…LWLA), 45-65 (VVSS…GYVI), 79-99 (FIFA…SWLA), 102-122 (FVAG…LMCS), 131-151 (LLAA…LLVS), 157-177 (LMSV…PLLF), 204-224 (LGVN…GLMP), 235-255 (ASIG…QWPI), 270-290 (VQVF…AMAP), 291-311 (ALFI…AWAC), 325-345 (ALLL…AMLM), and 348-368 (FSDN…LLML).

It belongs to the major facilitator superfamily. YcaD (TC 2.A.1.26) family.

The protein resides in the cell inner membrane. This is an uncharacterized protein from Shigella sonnei (strain Ss046).